The following is a 329-amino-acid chain: Protein-arginine N-acetylglucosaminyltransferase NleB1 (329 aa).

N-beta-linked (GlcNAc) arginine; by autocatalysis glycosylation occurs at arginine 13. 48-50 (QWF) contributes to the UDP-N-acetyl-alpha-D-glucosamine binding site. Arginine 53 carries N-beta-linked (GlcNAc) arginine; by autocatalysis glycosylation. Residue tyrosine 72 coordinates UDP-N-acetyl-alpha-D-glucosamine. N-beta-linked (GlcNAc) arginine; by autocatalysis glycosylation occurs at arginine 159. 219-222 (YLDA) is a binding site for UDP-N-acetyl-alpha-D-glucosamine. Residues 221 to 223 (DAD) carry the DXD motif motif. Aspartate 223 serves as a coordination point for Mn(2+). The active-site Proton acceptor is glutamate 253. N-beta-linked (GlcNAc) arginine; by autocatalysis glycosylation occurs at arginine 293. Asparagine 320 and serine 322 together coordinate Mn(2+). UDP-N-acetyl-alpha-D-glucosamine is bound by residues serine 322 and 327–329 (SSW).

Belongs to the glycosyltransferase NleB family. The cofactor is Mn(2+). Post-translationally, auto-glycosylated: arginine GlcNAcylation is required for activity toward death domain-containing host target proteins.

Its subcellular location is the secreted. The protein localises to the host cytoplasm. It catalyses the reaction L-arginyl-[protein] + UDP-N-acetyl-alpha-D-glucosamine = N(omega)-(N-acetyl-beta-D-glucosaminyl)-L-arginyl-[protein] + UDP + H(+). Its activity is regulated as follows. Protein-arginine N-acetylglucosaminyltransferase activity is inhibited by 100066N compound (flavone analog) and 102644N compound (a substituted isoxazole). In terms of biological role, protein-arginine N-acetylglucosaminyltransferase effector that disrupts TNF signaling in infected cells, including NF-kappa-B signaling, apoptosis and necroptosis. Acts by catalyzing the transfer of a single N-acetylglucosamine (GlcNAc) to a conserved arginine residue in the death domain of host proteins such as FADD: arginine GlcNAcylation prevents homotypic/heterotypic death domain interactions and assembly of the oligomeric TNF-alpha receptor complex, thereby disrupting TNF signaling. Also acts on host proteins without a death domain: catalyzes arginine GlcNAcylation of host GAPDH protein, thereby preventing GAPDH interaction with TRAF2, leading to inhibit NF-kappa-B signaling. Catalyzes auto-GlcNAcylation, which is required for activity toward death domain-containing host target proteins. This Escherichia coli O157:H7 protein is Protein-arginine N-acetylglucosaminyltransferase NleB1.